A 44-amino-acid polypeptide reads, in one-letter code: Photosystem I reaction center subunit IX (44 aa).

Residues 7–27 (YLSVAPVASTLWFVALAGLLI) form a helical membrane-spanning segment.

The protein belongs to the PsaJ family.

Its subcellular location is the plastid. The protein resides in the chloroplast thylakoid membrane. May help in the organization of the PsaE and PsaF subunits. The chain is Photosystem I reaction center subunit IX from Cicer arietinum (Chickpea).